Consider the following 318-residue polypeptide: RNA polymerase II transcription factor B subunit 3 (318 aa).

The segment at 13-54 (CPLCQADRYLNPNMKLLINPECYHKMCESCVDRIFTTGPAQC) adopts an RING-type zinc-finger fold.

As to quaternary structure, one of the nine subunits forming the core-TFIIH basal transcription factor. Also interacts with skp1 and with the mcs2-mcs6 complex.

The protein resides in the cytoplasm. Its subcellular location is the nucleus. Its function is as follows. Acts as a component of the general transcription and DNA repair factor IIH (TFIIH or factor B), which is essential for both basal and activated transcription, and is involved in nucleotide excision repair (NER) of damaged DNA. TFIIH has CTD kinase activity and DNA-dependent ATPase activity, and is essential for polymerase II transcription. In Schizosaccharomyces pombe (strain 972 / ATCC 24843) (Fission yeast), this protein is RNA polymerase II transcription factor B subunit 3 (pmh1).